The chain runs to 186 residues: Elongation factor P (186 aa).

This sequence belongs to the elongation factor P family.

Its subcellular location is the cytoplasm. Its pathway is protein biosynthesis; polypeptide chain elongation. Its function is as follows. Involved in peptide bond synthesis. Stimulates efficient translation and peptide-bond synthesis on native or reconstituted 70S ribosomes in vitro. Probably functions indirectly by altering the affinity of the ribosome for aminoacyl-tRNA, thus increasing their reactivity as acceptors for peptidyl transferase. The chain is Elongation factor P from Cupriavidus metallidurans (strain ATCC 43123 / DSM 2839 / NBRC 102507 / CH34) (Ralstonia metallidurans).